We begin with the raw amino-acid sequence, 509 residues long: Glycerol kinase (509 aa).

T17 provides a ligand contact to ADP. 3 residues coordinate ATP: T17, T18, and S19. T17 lines the sn-glycerol 3-phosphate pocket. R21 is an ADP binding site. The sn-glycerol 3-phosphate site is built by R87, E88, Y139, and D256. Glycerol contacts are provided by R87, E88, Y139, D256, and Q257. Positions 278 and 322 each coordinate ADP. ATP is bound by residues T278, G322, Q326, and A423. The ADP site is built by A423 and N427.

It belongs to the FGGY kinase family.

The enzyme catalyses glycerol + ATP = sn-glycerol 3-phosphate + ADP + H(+). The protein operates within polyol metabolism; glycerol degradation via glycerol kinase pathway; sn-glycerol 3-phosphate from glycerol: step 1/1. Its activity is regulated as follows. Inhibited by fructose 1,6-bisphosphate (FBP). In terms of biological role, key enzyme in the regulation of glycerol uptake and metabolism. Catalyzes the phosphorylation of glycerol to yield sn-glycerol 3-phosphate. This chain is Glycerol kinase, found in Corynebacterium glutamicum (strain R).